The following is a 240-amino-acid chain: Ubiquinone biosynthesis O-methyltransferase (240 aa).

S-adenosyl-L-methionine-binding residues include Arg-44, Gly-64, Asp-85, and Met-129.

The protein belongs to the methyltransferase superfamily. UbiG/COQ3 family.

It catalyses the reaction a 3-demethylubiquinol + S-adenosyl-L-methionine = a ubiquinol + S-adenosyl-L-homocysteine + H(+). The catalysed reaction is a 3-(all-trans-polyprenyl)benzene-1,2-diol + S-adenosyl-L-methionine = a 2-methoxy-6-(all-trans-polyprenyl)phenol + S-adenosyl-L-homocysteine + H(+). Its pathway is cofactor biosynthesis; ubiquinone biosynthesis. O-methyltransferase that catalyzes the 2 O-methylation steps in the ubiquinone biosynthetic pathway. The chain is Ubiquinone biosynthesis O-methyltransferase from Escherichia coli O6:H1 (strain CFT073 / ATCC 700928 / UPEC).